The following is a 363-amino-acid chain: Peptide chain release factor 1 (363 aa).

Gln-237 bears the N5-methylglutamine mark.

Belongs to the prokaryotic/mitochondrial release factor family. Methylated by PrmC. Methylation increases the termination efficiency of RF1.

It localises to the cytoplasm. Its function is as follows. Peptide chain release factor 1 directs the termination of translation in response to the peptide chain termination codons UAG and UAA. The sequence is that of Peptide chain release factor 1 from Mesoplasma florum (strain ATCC 33453 / NBRC 100688 / NCTC 11704 / L1) (Acholeplasma florum).